A 119-amino-acid chain; its full sequence is Large ribosomal subunit protein uL22 (119 aa).

The protein belongs to the universal ribosomal protein uL22 family. As to quaternary structure, part of the 50S ribosomal subunit.

In terms of biological role, this protein binds specifically to 23S rRNA; its binding is stimulated by other ribosomal proteins, e.g. L4, L17, and L20. It is important during the early stages of 50S assembly. It makes multiple contacts with different domains of the 23S rRNA in the assembled 50S subunit and ribosome. The globular domain of the protein is located near the polypeptide exit tunnel on the outside of the subunit, while an extended beta-hairpin is found that lines the wall of the exit tunnel in the center of the 70S ribosome. The protein is Large ribosomal subunit protein uL22 of Bifidobacterium adolescentis (strain ATCC 15703 / DSM 20083 / NCTC 11814 / E194a).